A 529-amino-acid chain; its full sequence is MQQRRSVRRALLSVSDKAGIVEFAQALSARGVELLSTGGTARLLAEKGLPVTEVSDYTGFPEMMDGRVKTLHPKVHGGILGRRGQDDGIMEQHGIAPIDMVVVNLYPFAETVAHVGCSLEDAVENIDIGGPTMVRSAAKNHKDVAIVVKSSDYDAIINEMDANEGSLLLETRFDLAIKAFEHTAAYDSMIANYFGSMVPAYHGESKEAAGRFPRTLNLNFIKKQDMRYGENSHQQAAFYIEENVKEASVATAQQVQGKALSYNNIADTDAALECVKAFSEPACVIVKHANPCGVAVSASILDAYDRAYKTDPTSAFGGIIAFNRELDAETAQAIISRQFVEVIIAPSATEEALKITAAKQNVRVLTCGQWAQRVPGLDFKRVNGGLLVQDRDLGMVSERELRVVSKRQPTEQELRDALFCWKVAKFVKSNAIVYAKENMTIGIGAGQMSRVYSAKIAGIKAADEGLEVQGSAMASDAFFPFRDGIDAAAAVGVSCVIQPGGSIRDDEVIAAADEHGIAMIFTDMRHFRH.

The 148-residue stretch at 1–148 (MQQRRSVRRA…KNHKDVAIVV (148 aa)) folds into the MGS-like domain.

The protein belongs to the PurH family.

The catalysed reaction is (6R)-10-formyltetrahydrofolate + 5-amino-1-(5-phospho-beta-D-ribosyl)imidazole-4-carboxamide = 5-formamido-1-(5-phospho-D-ribosyl)imidazole-4-carboxamide + (6S)-5,6,7,8-tetrahydrofolate. It carries out the reaction IMP + H2O = 5-formamido-1-(5-phospho-D-ribosyl)imidazole-4-carboxamide. The protein operates within purine metabolism; IMP biosynthesis via de novo pathway; 5-formamido-1-(5-phospho-D-ribosyl)imidazole-4-carboxamide from 5-amino-1-(5-phospho-D-ribosyl)imidazole-4-carboxamide (10-formyl THF route): step 1/1. Its pathway is purine metabolism; IMP biosynthesis via de novo pathway; IMP from 5-formamido-1-(5-phospho-D-ribosyl)imidazole-4-carboxamide: step 1/1. The sequence is that of Bifunctional purine biosynthesis protein PurH from Salmonella arizonae (strain ATCC BAA-731 / CDC346-86 / RSK2980).